Here is a 1028-residue protein sequence, read N- to C-terminus: Pro-apoptotic serine protease nma111 (1028 aa).

The interval 1–46 is disordered; the sequence is MDLNGETSTKRKRSSVAAPAERPAKHLKPGNSTLTPGDATPANGTV. A serine protease region spans residues 82-266; that stretch reads VVSIHFCQTC…AATDYFLPLD (185 aa). Active-site charge relay system residues include His120, Asp151, and Ser233. 2 PDZ domains span residues 289-374 and 876-957; these read QWIL…LLVQ and VFCG…VTFD. The span at 991-1001 shows a compositional bias: basic and acidic residues; it reads SHERDRHKDGI. The segment at 991–1028 is disordered; it reads SHERDRHKDGITPDAANLNPDAMDEVYEEVSDVEPEVD. Acidic residues predominate over residues 1012–1028; sequence AMDEVYEEVSDVEPEVD.

This sequence belongs to the peptidase S1C family.

The protein localises to the nucleus. Nuclear serine protease which mediates apoptosis. The polypeptide is Pro-apoptotic serine protease nma111 (nma111) (Aspergillus fumigatus (strain ATCC MYA-4609 / CBS 101355 / FGSC A1100 / Af293) (Neosartorya fumigata)).